A 429-amino-acid polypeptide reads, in one-letter code: Ribosomal RNA small subunit methyltransferase B (429 aa).

S-adenosyl-L-methionine contacts are provided by residues 254–260 (CAAPGGK), Asp-277, Asp-303, and Asp-322. The active-site Nucleophile is Cys-375.

The protein belongs to the class I-like SAM-binding methyltransferase superfamily. RsmB/NOP family.

The protein localises to the cytoplasm. The catalysed reaction is cytidine(967) in 16S rRNA + S-adenosyl-L-methionine = 5-methylcytidine(967) in 16S rRNA + S-adenosyl-L-homocysteine + H(+). Functionally, specifically methylates the cytosine at position 967 (m5C967) of 16S rRNA. This Escherichia coli (strain SE11) protein is Ribosomal RNA small subunit methyltransferase B.